A 176-amino-acid polypeptide reads, in one-letter code: Pituitary adenylate cyclase-activating polypeptide (176 aa).

The N-terminal stretch at 1-24 is a signal peptide; sequence MTMCSGARLALLVYGILMHSSVYG. A propeptide spanning residues 25-80 is cleaved from the precursor; the sequence is SPAASGLRFPGIRPENEAYDEDGNPQQDFYDSEPPGVGSPASALRDAYALYYPAEE. Disordered regions lie at residues 36-62 and 115-134; these read IRPE…PGVG and GTPG…RHSD. Residues 150–158 form an important for receptor binding region; the sequence is VKKYLAAVL. Leucine 158 is subject to Leucine amide. Lysine 169 carries the lysine amide modification. The propeptide occupies 173–176; the sequence is IPYL.

Belongs to the glucagon family.

The protein resides in the secreted. PACAP is a neuropeptide involved in diverse array of physiological processes through activating the PACAP subfamily of class B1 G protein-coupled receptors: VIP receptor 1 (VIPR1), VIP receptor 2 (VIPR2), and PACAP type I receptor (ADCYAP1R1). Exerts neuroprotective and general cytoprotective effects due to anti-apoptotic, anti-inflammatory, and antioxidant actions. Promotes neuron projection development through the RAPGEF2/Rap1/B-Raf/ERK pathway. In chromaffin cells, induces long-lasting increase of intracellular calcium concentrations and neuroendocrine secretion. Involved in the control of glucose homeostasis, induces insulin secretion by pancreatic beta cells. PACAP exists in two bioactive forms from proteolysis of the same precursor protein, PACAP27 and PACAP38, which differ by eleven amino acid residues in the C-terminus. This Ovis aries (Sheep) protein is Pituitary adenylate cyclase-activating polypeptide (ADCYAP1).